A 131-amino-acid polypeptide reads, in one-letter code: Small ribosomal subunit protein uS8 (131 aa).

Belongs to the universal ribosomal protein uS8 family. As to quaternary structure, part of the 30S ribosomal subunit. Contacts proteins S5 and S12.

Its function is as follows. One of the primary rRNA binding proteins, it binds directly to 16S rRNA central domain where it helps coordinate assembly of the platform of the 30S subunit. The polypeptide is Small ribosomal subunit protein uS8 (Burkholderia multivorans (strain ATCC 17616 / 249)).